The sequence spans 75 residues: DNA-directed RNA polymerase subunit omega (75 aa).

Belongs to the RNA polymerase subunit omega family. In cyanobacteria the RNAP catalytic core is composed of 2 alpha, 1 beta, 1 beta', 1 gamma and 1 omega subunit. When a sigma factor is associated with the core the holoenzyme is formed, which can initiate transcription.

The enzyme catalyses RNA(n) + a ribonucleoside 5'-triphosphate = RNA(n+1) + diphosphate. Functionally, promotes RNA polymerase assembly. Latches the N- and C-terminal regions of the beta' subunit thereby facilitating its interaction with the beta and alpha subunits. The polypeptide is DNA-directed RNA polymerase subunit omega (Cyanothece sp. (strain PCC 7425 / ATCC 29141)).